Reading from the N-terminus, the 95-residue chain is Translation initiation factor 1A (95 aa).

An S1-like domain is found at 6–80 (SRKNLRMPEE…EKADITWRYE (75 aa)).

It belongs to the eIF-1A family.

Seems to be required for maximal rate of protein biosynthesis. Enhances ribosome dissociation into subunits and stabilizes the binding of the initiator Met-tRNA(I) to 40 S ribosomal subunits. This chain is Translation initiation factor 1A, found in Haloarcula marismortui (strain ATCC 43049 / DSM 3752 / JCM 8966 / VKM B-1809) (Halobacterium marismortui).